We begin with the raw amino-acid sequence, 134 residues long: Protein LctB (134 aa).

The polypeptide is Protein LctB (lctB) (Bacillus caldotenax).